The chain runs to 447 residues: GTPase Era, mitochondrial (447 aa).

A mitochondrion-targeting transit peptide spans 1 to 18 (MTLRSCETFLRRSLRFST). The Era-type G domain occupies 109-340 (KSLKVAIVGS…RYLFVAAKPC (232 aa)). A G1 region spans residues 117-124 (GSPNAGKS). Residue 117-124 (GSPNAGKS) participates in GTP binding. The G2 stretch occupies residues 143–147 (HTTRS). Positions 164-167 (DTPG) are G3. GTP-binding positions include 164–168 (DTPGL) and 233–236 (NKVD). The G4 stretch occupies residues 233–236 (NKVD). Residues 318–320 (LSS) are G5. Residues 370-447 (LPKEVPYTMT…RLKISVKLRK (78 aa)) enclose the KH type-2 domain.

It belongs to the TRAFAC class TrmE-Era-EngA-EngB-Septin-like GTPase superfamily. Era GTPase family.

Its subcellular location is the mitochondrion matrix. It localises to the mitochondrion inner membrane. Functionally, probable GTPase that plays a role in the mitochondrial ribosomal small subunit assembly. Specifically binds the 12S mitochondrial rRNA (12S mt-rRNA) to a 33 nucleotide section delineating the 3' terminal stem-loop region. May act as a chaperone that protects the 12S mt-rRNA on the 28S mitoribosomal subunit during ribosomal small subunit assembly. The sequence is that of GTPase Era, mitochondrial (eral1) from Danio rerio (Zebrafish).